A 146-amino-acid chain; its full sequence is Large ribosomal subunit protein bL9 (146 aa).

It belongs to the bacterial ribosomal protein bL9 family.

Functionally, binds to the 23S rRNA. This Nautilia profundicola (strain ATCC BAA-1463 / DSM 18972 / AmH) protein is Large ribosomal subunit protein bL9.